Here is a 459-residue protein sequence, read N- to C-terminus: Sulfide:quinone oxidoreductase, mitochondrial (459 aa).

Residues 1-24 (MLTLNSTIKSVTGSFQSASMLARF) constitute a mitochondrion transit peptide. 35 to 39 (GGGSA) lines the FAD pocket. Active-site cysteine persulfide intermediate residues include cysteine 204 and cysteine 383.

This sequence belongs to the SQRD family. It depends on FAD as a cofactor.

The protein resides in the mitochondrion. Functionally, catalyzes the oxidation of hydrogen sulfide, with the help of a quinone. The protein is Sulfide:quinone oxidoreductase, mitochondrial (hmt2) of Schizosaccharomyces pombe (strain 972 / ATCC 24843) (Fission yeast).